We begin with the raw amino-acid sequence, 234 residues long: Ribosomal RNA small subunit methyltransferase G (234 aa).

S-adenosyl-L-methionine-binding positions include glycine 96, leucine 101, 119-121 (DAT), 147-148 (VE), and arginine 161.

The protein belongs to the methyltransferase superfamily. RNA methyltransferase RsmG family.

The protein localises to the cytoplasm. Specifically methylates the N7 position of a guanine in 16S rRNA. In Chlorobium chlorochromatii (strain CaD3), this protein is Ribosomal RNA small subunit methyltransferase G.